The chain runs to 74 residues: VRVVVLALVAQVTLSQHWSYGWLPGGKRSVGELEATIKMMDTGGVVALPEETSAHVSERLRPYDVILKKWMPHK.

A signal peptide spans 1–15; that stretch reads VRVVVLALVAQVTLS. A Pyrrolidone carboxylic acid modification is found at Q16. At G25 the chain carries Glycine amide.

It belongs to the GnRH family.

The protein localises to the secreted. Functionally, stimulates the secretion of gonadotropins. The polypeptide is Progonadoliberin-3 (gnrh3) (Oncorhynchus tshawytscha (Chinook salmon)).